We begin with the raw amino-acid sequence, 347 residues long: N-acetyl-gamma-glutamyl-phosphate reductase (347 aa).

Cysteine 151 is an active-site residue.

This sequence belongs to the NAGSA dehydrogenase family. Type 1 subfamily.

It is found in the cytoplasm. It catalyses the reaction N-acetyl-L-glutamate 5-semialdehyde + phosphate + NADP(+) = N-acetyl-L-glutamyl 5-phosphate + NADPH + H(+). Its pathway is amino-acid biosynthesis; L-arginine biosynthesis; N(2)-acetyl-L-ornithine from L-glutamate: step 3/4. Catalyzes the NADPH-dependent reduction of N-acetyl-5-glutamyl phosphate to yield N-acetyl-L-glutamate 5-semialdehyde. The polypeptide is N-acetyl-gamma-glutamyl-phosphate reductase (Pelotomaculum thermopropionicum (strain DSM 13744 / JCM 10971 / SI)).